The following is a 1313-amino-acid chain: Inter-alpha-trypsin inhibitor heavy chain H6 (1313 aa).

The first 23 residues, 1-23 (MSGWRYLICVSFLLTILLELTYQ), serve as a signal peptide directing secretion. The region spanning 24-150 (GPPVPASSST…EVTFSLAYEE (127 aa)) is the VIT domain. 4 N-linked (GlcNAc...) asparagine glycosylation sites follow: Asn83, Asn374, Asn540, and Asn594. The VWFA domain occupies 283 to 469 (NVVFVIDVSS…LQLKGLYEEI (187 aa)). 4 disordered regions span residues 612–644 (QPKQ…HGLG), 783–817 (HSKP…TLQV), 856–928 (LKPS…EPLP), and 959–983 (PSRP…SPPN). A compositionally biased stretch (polar residues) spans 623-640 (QTSTSAGPDTIMPSSSSR). Over residues 864-875 (QISTSISLSKPE) the composition is skewed to polar residues. Residues 876 to 888 (TPNPHMPQTPLPP) show a composition bias toward pro residues. The span at 907-921 (TISSSTGPSSTTTTS) shows a compositional bias: low complexity. Asn971 and Asn1231 each carry an N-linked (GlcNAc...) asparagine glycan.

It belongs to the ITIH family.

It is found in the secreted. This Homo sapiens (Human) protein is Inter-alpha-trypsin inhibitor heavy chain H6 (ITIH6).